A 156-amino-acid chain; its full sequence is Deoxyuridine 5'-triphosphate nucleotidohydrolase (156 aa).

Residues 76–78 (RSG), Asn-89, 93–95 (TVD), and Lys-103 contribute to the substrate site.

Belongs to the dUTPase family. Mg(2+) serves as cofactor.

The catalysed reaction is dUTP + H2O = dUMP + diphosphate + H(+). It functions in the pathway pyrimidine metabolism; dUMP biosynthesis; dUMP from dCTP (dUTP route): step 2/2. In terms of biological role, this enzyme is involved in nucleotide metabolism: it produces dUMP, the immediate precursor of thymidine nucleotides and it decreases the intracellular concentration of dUTP so that uracil cannot be incorporated into DNA. This chain is Deoxyuridine 5'-triphosphate nucleotidohydrolase, found in Rhizobium etli (strain CIAT 652).